The sequence spans 350 residues: Opsin, longwave 563 nm (350 aa).

Over 1–45 the chain is Extracellular; sequence HRLAGRHPQDNYEDSTQSSIFTYTNSNSTRGPFEGPNYHIAPRWV. Asn27 is a glycosylation site (N-linked (GlcNAc...) asparagine). The helical transmembrane segment at 46-70 threads the bilayer; it reads YHLTSVWMLFVVVASVFTNGLVLAA. Residues 71–82 lie on the Cytoplasmic side of the membrane; that stretch reads TMKFKKLRHPLN. Residues 83–108 form a helical membrane-spanning segment; it reads WILVNLAIADLAETVIASTISVVNQV. The Extracellular segment spans residues 109–122; that stretch reads HGYFVLGHPMCVLE. Cys119 and Cys196 are disulfide-bonded. The helical transmembrane segment at 123 to 142 threads the bilayer; the sequence is GYTVSLCGITGLWSLAIISW. Over 143–161 the chain is Cytoplasmic; sequence ERWLVVCKPFGNVRFDAKL. A helical membrane pass occupies residues 162-185; sequence AIVGVAFSWIWSAVWTAPPIFGWS. The Extracellular portion of the chain corresponds to 186-211; that stretch reads RYWPHGLKTSCGPDVFSGSSYPGVQS. The chain crosses the membrane as a helical span at residues 212 to 239; the sequence is YMIVLMITCCFLPLGIIVLCYLQVWLAI. Residues 240 to 261 lie on the Cytoplasmic side of the membrane; that stretch reads RAVAKQQKESESTQKAEKEVTR. The chain crosses the membrane as a helical span at residues 262 to 285; the sequence is MVVVMIVAYCVCWGPYTFFACFAA. Residues 286-293 are Extracellular-facing; the sequence is ANPGYAFH. Residues 294–318 traverse the membrane as a helical segment; that stretch reads PLMAALPAYFAKSATIYNPIIYVFM. Lys305 carries the N6-(retinylidene)lysine modification. At 319 to 350 the chain is on the cytoplasmic side; the sequence is NRQFRNCILQLFGKKVDDGSELSSASKTEVSS.

It belongs to the G-protein coupled receptor 1 family. Opsin subfamily. Phosphorylated on some or all of the serine and threonine residues present in the C-terminal region. The color pigments are found in the cone photoreceptor cells.

The protein localises to the membrane. Visual pigments are the light-absorbing molecules that mediate vision. They consist of an apoprotein, opsin, covalently linked to cis-retinal. This chain is Opsin, longwave 563 nm, found in Callithrix jacchus (White-tufted-ear marmoset).